Here is a 187-residue protein sequence, read N- to C-terminus: Biogenesis of lysosome-related organelles complex 1 subunit 5 (187 aa).

The interval 1 to 26 (MSGGGTETPVGCEAAPGGGSKKRDSL) is disordered. N-acetylserine is present on serine 2. A coiled-coil region spans residues 154-186 (NKRAEVDEEHRKAMERLKEQYAEMEKDLAKFST).

It belongs to the BLOC1S5 family. Interacts with BLOC1S4, DTNBP1/BLOC1S7 and PI4K2A. Component of the biogenesis of lysosome-related organelles complex 1 (BLOC-1) composed of BLOC1S1, BLOC1S2, BLOC1S3, BLOC1S4, BLOC1S5, BLOC1S6, DTNBP1/BLOC1S7 and SNAPIN/BLOC1S8. Octamer composed of one copy each BLOC1S1, BLOC1S2, BLOC1S3, BLOC1S4, BLOC1S5, BLOC1S6, DTNBP1/BLOC1S7 and SNAPIN/BLOC1S8. The BLOC-1 complex associates with the AP-3 protein complex and membrane protein cargos. Interacts with BLOC1S6.

Functionally, component of the BLOC-1 complex, a complex that is required for normal biogenesis of lysosome-related organelles (LRO), such as platelet dense granules and melanosomes. In concert with the AP-3 complex, the BLOC-1 complex is required to target membrane protein cargos into vesicles assembled at cell bodies for delivery into neurites and nerve terminals. The BLOC-1 complex, in association with SNARE proteins, is also proposed to be involved in neurite extension. Plays a role in intracellular vesicle trafficking. The chain is Biogenesis of lysosome-related organelles complex 1 subunit 5 from Homo sapiens (Human).